Here is a 147-residue protein sequence, read N- to C-terminus: Protein-export protein SecB (147 aa).

This sequence belongs to the SecB family. As to quaternary structure, homotetramer, a dimer of dimers. One homotetramer interacts with 1 SecA dimer.

It localises to the cytoplasm. Its function is as follows. One of the proteins required for the normal export of preproteins out of the cell cytoplasm. It is a molecular chaperone that binds to a subset of precursor proteins, maintaining them in a translocation-competent state. It also specifically binds to its receptor SecA. This chain is Protein-export protein SecB, found in Neisseria meningitidis serogroup C (strain 053442).